Consider the following 151-residue polypeptide: UPF0178 protein Sde_3033 (151 aa).

This sequence belongs to the UPF0178 family.

The sequence is that of UPF0178 protein Sde_3033 from Saccharophagus degradans (strain 2-40 / ATCC 43961 / DSM 17024).